Consider the following 126-residue polypeptide: UPF0325 protein PBPRA2971 (126 aa).

Belongs to the UPF0325 family.

This chain is UPF0325 protein PBPRA2971, found in Photobacterium profundum (strain SS9).